We begin with the raw amino-acid sequence, 183 residues long: Protein jagunal homolog 1 (183 aa).

Residues 1–39 (MASRAGPRAAGTDGSDFQHRERVAMHYQMSVTLKYEIKK) are Cytoplasmic-facing. S3 carries the phosphoserine modification. A helical transmembrane segment spans residues 40 to 60 (LIYVHLVIWLLLVAKMSVGHL). Residues 61 to 71 (RLLSHDQVAMP) are Lumenal-facing. A helical membrane pass occupies residues 72 to 92 (YQWEYPYLLSVVPSLLGLLSF). The Cytoplasmic segment spans residues 93–96 (PRNN). A helical membrane pass occupies residues 97–117 (ISYLVLSMISMGLFSIAPLIY). Residues 118–137 (GSMEMFPAAQQLYRHGKAYR) lie on the Lumenal side of the membrane. Residues 138–158 (FLFGFSAVSVMYLVLVLAVQV) form a helical membrane-spanning segment. Over 159 to 183 (HAWQLYYSKKLLDSWFTSTQEKKRK) the chain is Cytoplasmic.

This sequence belongs to the jagunal family. In terms of assembly, interacts with COPA, COPB2 and COPG2.

It localises to the endoplasmic reticulum membrane. Functionally, endoplasmic reticulum transmembrane protein involved in vesicle-mediated transport, which is required for neutrophil function. Required for vesicle-mediated transport; it is however unclear whether it is involved in early secretory pathway or intracellular protein transport. Acts as a regulator of neutrophil function, probably via its role in vesicle-mediated transport: required for defense against fungal pathogens and for granulocyte colony-stimulating factor (GM-CSF) signaling pathway; possibly by regulating glycosylation and/or targeting of proteins contributing to the viability and migration of neutrophils. This chain is Protein jagunal homolog 1 (JAGN1), found in Bos taurus (Bovine).